The following is a 409-amino-acid chain: uncharacterized protein (409 aa).

10 helical membrane-spanning segments follow: residues 22-42 (ILII…VIPA), 58-78 (LGII…VVGW), 99-119 (GILG…VFFI), 174-194 (FGAV…MYIA), 217-237 (NTAI…LIFA), 266-286 (SYIF…GPLA), 293-312 (FVIL…LPFA), 316-338 (LAYG…TVVY), 353-373 (LTVG…GALI), and 378-398 (LTPT…AFLL).

This sequence belongs to the major facilitator superfamily.

It is found in the cell membrane. This is an uncharacterized protein from Bacillus subtilis (strain 168).